The primary structure comprises 135 residues: Small ribosomal subunit protein uS12 (135 aa).

Aspartate 89 bears the 3-methylthioaspartic acid mark. The interval 114–135 (RSRYGAKKGAAKQAAAAKSKKK) is disordered. The span at 124–135 (AKQAAAAKSKKK) shows a compositional bias: low complexity.

Belongs to the universal ribosomal protein uS12 family. In terms of assembly, part of the 30S ribosomal subunit. Contacts proteins S8 and S17. May interact with IF1 in the 30S initiation complex.

Its function is as follows. With S4 and S5 plays an important role in translational accuracy. In terms of biological role, interacts with and stabilizes bases of the 16S rRNA that are involved in tRNA selection in the A site and with the mRNA backbone. Located at the interface of the 30S and 50S subunits, it traverses the body of the 30S subunit contacting proteins on the other side and probably holding the rRNA structure together. The combined cluster of proteins S8, S12 and S17 appears to hold together the shoulder and platform of the 30S subunit. The protein is Small ribosomal subunit protein uS12 of Amoebophilus asiaticus (strain 5a2).